A 485-amino-acid chain; its full sequence is D-alanine--D-alanyl carrier protein ligase (485 aa).

ATP is bound at residue 144–145; the sequence is TS. Asp-189 lines the D-alanine pocket. An ATP-binding site is contributed by 284–289; it reads NTYGPT. Val-293 contributes to the D-alanine binding site. 2 residues coordinate ATP: Asp-365 and Lys-473. Lys-473 is a D-alanine binding site.

Belongs to the ATP-dependent AMP-binding enzyme family. DltA subfamily.

The protein localises to the cytoplasm. The enzyme catalyses holo-[D-alanyl-carrier protein] + D-alanine + ATP = D-alanyl-[D-alanyl-carrier protein] + AMP + diphosphate. Its pathway is cell wall biogenesis; lipoteichoic acid biosynthesis. Catalyzes the first step in the D-alanylation of lipoteichoic acid (LTA), the activation of D-alanine and its transfer onto the D-alanyl carrier protein (Dcp) DltC. In an ATP-dependent two-step reaction, forms a high energy D-alanyl-AMP intermediate, followed by transfer of the D-alanyl residue as a thiol ester to the phosphopantheinyl prosthetic group of the Dcp. D-alanylation of LTA plays an important role in modulating the properties of the cell wall in Gram-positive bacteria, influencing the net charge of the cell wall. This chain is D-alanine--D-alanyl carrier protein ligase, found in Staphylococcus aureus (strain Mu3 / ATCC 700698).